The sequence spans 252 residues: Chitooligosaccharide deacetylase (252 aa).

Mg(2+) contacts are provided by His61 and His125.

The protein belongs to the YdjC deacetylase family. ChbG subfamily. In terms of assembly, homodimer. Requires Mg(2+) as cofactor.

It is found in the cytoplasm. It catalyses the reaction N,N'-diacetylchitobiose + H2O = N-acetyl-beta-D-glucosaminyl-(1-&gt;4)-D-glucosamine + acetate. It carries out the reaction diacetylchitobiose-6'-phosphate + H2O = N'-monoacetylchitobiose-6'-phosphate + acetate. It participates in glycan degradation; chitin degradation. Involved in the degradation of chitin. ChbG is essential for growth on the acetylated chitooligosaccharides chitobiose and chitotriose but is dispensable for growth on cellobiose and chitosan dimer, the deacetylated form of chitobiose. Deacetylation of chitobiose-6-P and chitotriose-6-P is necessary for both the activation of the chb promoter by the regulatory protein ChbR and the hydrolysis of phosphorylated beta-glucosides by the phospho-beta-glucosidase ChbF. Catalyzes the removal of only one acetyl group from chitobiose-6-P to yield monoacetylchitobiose-6-P, the inducer of ChbR and the substrate of ChbF. In Salmonella schwarzengrund (strain CVM19633), this protein is Chitooligosaccharide deacetylase.